The primary structure comprises 554 residues: Putative acyl-coenzyme A synthetase (554 aa).

AMP is bound at residue 195-206 (LLYSSGTTGPPK).

It belongs to the ATP-dependent AMP-binding enzyme family.

In Emericella nidulans (strain FGSC A4 / ATCC 38163 / CBS 112.46 / NRRL 194 / M139) (Aspergillus nidulans), this protein is Putative acyl-coenzyme A synthetase.